A 133-amino-acid chain; its full sequence is Global transcriptional regulator Spx (133 aa).

Cysteine 10 and cysteine 13 form a disulfide bridge.

This sequence belongs to the ArsC family. Spx subfamily. As to quaternary structure, interacts with the C-terminal domain of the alpha subunit of the RNAP.

It localises to the cytoplasm. Functionally, global transcriptional regulator that plays a key role in stress response and exerts either positive or negative regulation of genes. Acts by interacting with the C-terminal domain of the alpha subunit of the RNA polymerase (RNAP). This interaction can enhance binding of RNAP to the promoter region of target genes and stimulate their transcription, or block interaction of RNAP with activator. The chain is Global transcriptional regulator Spx from Streptococcus pneumoniae serotype 4 (strain ATCC BAA-334 / TIGR4).